We begin with the raw amino-acid sequence, 291 residues long: Prolyl 4-hydroxylase 5 (291 aa).

Residues 1-22 are Cytoplasmic-facing; the sequence is MASKSKQHLRYQPRKSVSRSTQ. Residues 23-43 traverse the membrane as a helical; Signal-anchor for type II membrane protein segment; that stretch reads AFTVLILLLVVILILLGLGIL. Topologically, residues 44–291 are extracellular; it reads SLPNANRNSS…KWFHVHEFKV (248 aa). Residue N51 is glycosylated (N-linked (GlcNAc...) asparagine). The region spanning 163–286 is the Fe2OG dioxygenase domain; sequence NGEGLQVLHY…KWSSTKWFHV (124 aa). Fe cation-binding residues include H181 and D183. Residue N222 is glycosylated (N-linked (GlcNAc...) asparagine). Residue H267 coordinates Fe cation. K277 serves as a coordination point for 2-oxoglutarate.

The protein belongs to the P4HA family. Fe(2+) serves as cofactor. L-ascorbate is required as a cofactor. Expressed in epidermal root hair cells (trichoblasts).

Its subcellular location is the endoplasmic reticulum membrane. The protein localises to the golgi apparatus membrane. It catalyses the reaction L-prolyl-[collagen] + 2-oxoglutarate + O2 = trans-4-hydroxy-L-prolyl-[collagen] + succinate + CO2. Functionally, catalyzes the post-translational formation of 4-hydroxyproline in -Xaa-Pro-Gly- sequences in proline-rich peptide sequences of plant glycoproteins and other proteins. Hydroxyprolines are important constituent of many plant cell wall glycoproteins such as extensins, hydroxyproline-rich glycoproteins, lectins and arabinogalactan proteins. Possesses high affinity for leucine-rich repeat and proline-rich extensins of root cell walls that are essential for root hair development. Hydroxyprolines define the subsequent O-glycosylation sites by arabinosyltransferases which elongate the O-arabinosides on extensins. This is Prolyl 4-hydroxylase 5 from Arabidopsis thaliana (Mouse-ear cress).